Here is a 198-residue protein sequence, read N- to C-terminus: FMN-dependent NADH:quinone oxidoreductase (198 aa).

FMN contacts are provided by residues Ser-10, 16-18 (SQS), 94-97 (MYNF), and 138-141 (TRGG).

It belongs to the azoreductase type 1 family. Homodimer. FMN serves as cofactor.

The enzyme catalyses 2 a quinone + NADH + H(+) = 2 a 1,4-benzosemiquinone + NAD(+). It catalyses the reaction N,N-dimethyl-1,4-phenylenediamine + anthranilate + 2 NAD(+) = 2-(4-dimethylaminophenyl)diazenylbenzoate + 2 NADH + 2 H(+). Its function is as follows. Quinone reductase that provides resistance to thiol-specific stress caused by electrophilic quinones. Also exhibits azoreductase activity. Catalyzes the reductive cleavage of the azo bond in aromatic azo compounds to the corresponding amines. This is FMN-dependent NADH:quinone oxidoreductase from Shewanella sp. (strain ANA-3).